A 426-amino-acid polypeptide reads, in one-letter code: Pyruvate, phosphate dikinase regulatory protein, chloroplastic (426 aa).

A chloroplast-targeting transit peptide spans 1-41; it reads MIGCAKPLAAPLQAWARPPSPAGRRLPPSFCAPDTSPALTR. Disordered regions lie at residues 1–76 and 94–124; these read MIGC…HLDR and AALSSASVSAPPVIKSPRPEDAAVAAEDGED. Positions 94 to 119 are enriched in low complexity; it reads AALSSASVSAPPVIKSPRPEDAAVAA. Residue 153-160 coordinates ADP; the sequence is HSVNAALG.

Belongs to the pyruvate, phosphate/water dikinase regulatory protein family. PDRP subfamily. Homodimer at pH 7.5 and homotetramer at pH 8.3. Mg(2+) is required as a cofactor. In terms of tissue distribution, leaf mesophyll-cells.

Its subcellular location is the plastid. The protein localises to the chloroplast stroma. It catalyses the reaction N(tele)-phospho-L-histidyl/L-threonyl-[pyruvate, phosphate dikinase] + ADP = N(tele)-phospho-L-histidyl/O-phospho-L-threonyl-[pyruvate, phosphate dikinase] + AMP + H(+). The catalysed reaction is N(tele)-phospho-L-histidyl/O-phospho-L-threonyl-[pyruvate, phosphate dikinase] + phosphate + H(+) = N(tele)-phospho-L-histidyl/L-threonyl-[pyruvate, phosphate dikinase] + diphosphate. The protein operates within photosynthesis; C4 acid pathway. Its activity is regulated as follows. Regulated by light/dark exposure. In terms of biological role, bifunctional serine/threonine kinase and phosphorylase involved in the dark/light-mediated regulation of PPDK by catalyzing its phosphorylation/dephosphorylation. Dark/light-induced changes in stromal concentrations of the competing ADP and Pi substrates govern the direction of the reaction. In the dark, phosphorylates the catalytic intermediate of PPDK (PPDK-HisP), inactivating it. Light exposure induces the phosphorolysis reaction that reactivates PPDK. Phosphorylates PPDK at both Ser-528 and Thr-527. Can use ADP as a high specificity substrate and GDP as a lower affinity substrate, but has no activity with UDP. In Zea mays (Maize), this protein is Pyruvate, phosphate dikinase regulatory protein, chloroplastic (PDRP1).